A 482-amino-acid chain; its full sequence is MMETMPNWLKQRAFLTPDRTAIEIEEEKVTFMQLHEKVVSVCEHLTHVGVKRGQKVAVLMKNGMEMITVIHALSYVGAVAVLLNTRLSREELLWQMDDAEVICLVTDQDFEAKDIPVYSFAEVMNGPKEEASIQEEFSLREAMTIIYTSGTTGKPKGVILTYGNHWASAVGSSLNLGLRDDDCWLACMPMFHVGGLSLLMKNIMYGMRILLVPKYDADFIHKALQTRGVTIISVVSKMLTDLLERLGEGTYPSSLRCMLLGGGPAPKPLLETCVDKGIPVYQTYGMTETSSQICTLSADYMLTKVGSAGKPLFQCQLRIEKDGVVVPPFAEGEIVVKGPNVTGGYFNREDATRETIQNGWLHTGDLGYLDEEGFLYVLDRRSDLIISGGENIYPAQIEEVLLSHPMVAEAGVVGMTDDKWGQVPAAFVVKSGEVTEEEILHFCEEKLAKYKVPKKACFLEELPRNASKKLLRRELRQLVEEM.

This sequence belongs to the ATP-dependent AMP-binding enzyme family. MenE subfamily.

The catalysed reaction is 2-succinylbenzoate + ATP + CoA = 2-succinylbenzoyl-CoA + AMP + diphosphate. It participates in quinol/quinone metabolism; 1,4-dihydroxy-2-naphthoate biosynthesis; 1,4-dihydroxy-2-naphthoate from chorismate: step 5/7. The protein operates within quinol/quinone metabolism; menaquinone biosynthesis. Converts 2-succinylbenzoate (OSB) to 2-succinylbenzoyl-CoA (OSB-CoA). The chain is 2-succinylbenzoate--CoA ligase from Bacillus thuringiensis subsp. konkukian (strain 97-27).